The chain runs to 273 residues: (5R)-carbapenem-3-carboxylate synthase (273 aa).

Residues His101 and Asp103 each contribute to the Fe cation site. Gly104 lines the substrate pocket. 2-oxoglutarate is bound at residue Thr130. His251 is a binding site for Fe cation. The 2-oxoglutarate site is built by Arg253, Arg263, and Arg267.

The protein belongs to the TfdA dioxygenase family. In terms of assembly, homohexamer. Dimer of trimers. Fe(2+) serves as cofactor.

It is found in the cytoplasm. It carries out the reaction (3S,5S)-carbapenam-3-caboxylate + 2-oxoglutarate + O2 = (5R)-carbapenem-3-carboxylate + succinate + CO2 + H2O. Inhibited by L-N-acetylproline and by D-N-acetylproline. Catalyzes the Fe(2+) and alpha-ketoglutarate-dependent conversion of (3S,5S)-carbapenam to (5R)-carbapenem, an essential step in carbapenem antibiotic biosynthesis. The chain is (5R)-carbapenem-3-carboxylate synthase (carC) from Pectobacterium carotovorum subsp. carotovorum (Erwinia carotovora subsp. carotovora).